The chain runs to 494 residues: ATP synthase subunit beta, chloroplastic (494 aa).

ATP is bound at residue Gly-172–Thr-179.

This sequence belongs to the ATPase alpha/beta chains family. As to quaternary structure, F-type ATPases have 2 components, CF(1) - the catalytic core - and CF(0) - the membrane proton channel. CF(1) has five subunits: alpha(3), beta(3), gamma(1), delta(1), epsilon(1). CF(0) has four main subunits: a(1), b(1), b'(1) and c(9-12).

The protein localises to the plastid. It is found in the chloroplast thylakoid membrane. It catalyses the reaction ATP + H2O + 4 H(+)(in) = ADP + phosphate + 5 H(+)(out). Produces ATP from ADP in the presence of a proton gradient across the membrane. The catalytic sites are hosted primarily by the beta subunits. This Physcomitrium patens (Spreading-leaved earth moss) protein is ATP synthase subunit beta, chloroplastic.